The following is a 440-amino-acid chain: MFLAQEIIRKKRDGHALSDEEIRFFINGIRDNTVSEGQIAALAMTIFFHDMTMPERVSLTMAMRDSGTVLDWKSLNLNGPVVDKHSTGGVGDVTSLMLGPMVAACGGYIPMISGRGLGHTGGTLDKLEAIPGFDIFPDDNRFRDIIKNVGVAIIGQTNSLAPADKRFYATRDITATVDSIPLITASILAKKLAEGLDALVMDVKVGSGAFMPTYALSEELAQAIVGVANGAGVRTTALLTDMNEVLASSAGNAVEVREAVRFLTGDYRNPRLLEVTMALCVEMLLSGGLAKDETEARAKLQQVLDNGQAAEIFGRMVAAQSGPADFVDNYERYLPAATLSKAVYADRSGFVTQMDTRALGMAVVAMGGGRRQASDSIDYSVGLTDMARLGEQVDGERPLAIIHAKSEASWQEAAAAVKAAINVDDTAAKTSPVVYRRISE.

The protein belongs to the thymidine/pyrimidine-nucleoside phosphorylase family. In terms of assembly, homodimer.

The catalysed reaction is thymidine + phosphate = 2-deoxy-alpha-D-ribose 1-phosphate + thymine. Its pathway is pyrimidine metabolism; dTMP biosynthesis via salvage pathway; dTMP from thymine: step 1/2. Its function is as follows. The enzymes which catalyze the reversible phosphorolysis of pyrimidine nucleosides are involved in the degradation of these compounds and in their utilization as carbon and energy sources, or in the rescue of pyrimidine bases for nucleotide synthesis. The chain is Thymidine phosphorylase from Cronobacter sakazakii (strain ATCC BAA-894) (Enterobacter sakazakii).